A 488-amino-acid chain; its full sequence is Inosine-5'-monophosphate dehydrogenase (488 aa).

CBS domains lie at 95–153 (VITN…SMKI) and 157–214 (MTKE…PNSS). NAD(+)-binding positions include D251 and 301–303 (GIG). 2 residues coordinate K(+): G303 and G305. IMP is bound at residue S306. Residue C308 coordinates K(+). Residue C308 is the Thioimidate intermediate of the active site. IMP contacts are provided by residues 341–343 (DGG), 364–365 (GS), and 388–392 (YRGMG). The active-site Proton acceptor is the R404. Position 416 (E416) interacts with IMP. The K(+) site is built by E470, S471, and H472.

It belongs to the IMPDH/GMPR family. Homotetramer. The cofactor is K(+).

It carries out the reaction IMP + NAD(+) + H2O = XMP + NADH + H(+). It functions in the pathway purine metabolism; XMP biosynthesis via de novo pathway; XMP from IMP: step 1/1. With respect to regulation, mycophenolic acid (MPA) is a non-competitive inhibitor that prevents formation of the closed enzyme conformation by binding to the same site as the amobile flap. In contrast, mizoribine monophosphate (MZP) is a competitive inhibitor that induces the closed conformation. MPA is a potent inhibitor of mammalian IMPDHs but a poor inhibitor of the bacterial enzymes. MZP is a more potent inhibitor of bacterial IMPDH. Functionally, catalyzes the conversion of inosine 5'-phosphate (IMP) to xanthosine 5'-phosphate (XMP), the first committed and rate-limiting step in the de novo synthesis of guanine nucleotides, and therefore plays an important role in the regulation of cell growth. The chain is Inosine-5'-monophosphate dehydrogenase from Bacillus subtilis (strain 168).